Consider the following 34-residue polypeptide: Photosystem II reaction center protein Psb30 (34 aa).

Residues 6–26 (VIGQLTSLAMIVLVGPAVIVV) traverse the membrane as a helical segment.

The protein belongs to the Psb30/Ycf12 family. In terms of assembly, PSII is composed of 1 copy each of membrane proteins PsbA, PsbB, PsbC, PsbD, PsbE, PsbF, PsbH, PsbI, PsbJ, PsbK, PsbL, PsbM, PsbT, PsbX, PsbY, PsbZ, Psb30/Ycf12, peripheral proteins of the oxygen-evolving complex and a large number of cofactors. It forms dimeric complexes.

The protein localises to the plastid. It is found in the chloroplast thylakoid membrane. Functionally, a core subunit of photosystem II (PSII), probably helps stabilize the reaction center. This is Photosystem II reaction center protein Psb30 from Gracilaria tenuistipitata var. liui (Red alga).